A 392-amino-acid chain; its full sequence is Probable protein phosphatase 2C 29 (392 aa).

The 310-residue stretch at 44–353 (DYSVAVAQAN…DDITVVVLFL (310 aa)) folds into the PPM-type phosphatase domain. Mn(2+)-binding residues include D75, G76, D285, and D344. The disordered stretch occupies residues 360-392 (AGRGDEIDGTDGPVDVFSLSPDDREDPTRPVLR).

The protein belongs to the PP2C family. Requires Mg(2+) as cofactor. Mn(2+) serves as cofactor.

The enzyme catalyses O-phospho-L-seryl-[protein] + H2O = L-seryl-[protein] + phosphate. The catalysed reaction is O-phospho-L-threonyl-[protein] + H2O = L-threonyl-[protein] + phosphate. The chain is Probable protein phosphatase 2C 29 from Oryza sativa subsp. japonica (Rice).